The primary structure comprises 421 residues: Inner membrane protein YihN (421 aa).

The Periplasmic segment spans residues 1–44 (MLTKKKWALFSLLTLCGGTIYKLPSLKDAFYIPMQEYFHLTNGQ). The helical transmembrane segment at 45 to 65 (IGNAMSVNSFVTTVGFFLSIY) threads the bilayer. At 66-73 (FADKLPRR) the chain is on the cytoplasmic side. Residues 74–91 (YTMSFSLIATGLLGVYLT) form a helical membrane-spanning segment. Residues 92–95 (TMPG) are Periplasmic-facing. Residues 96–118 (YWGILFVWALFGVTCDMMNWPVL) traverse the membrane as a helical segment. Residues 119-146 (LKSVSRLGNSEQQGRLFGFFETGRGIVD) are Cytoplasmic-facing. A helical transmembrane segment spans residues 147–167 (TVVAFSALAVFTWFGSGLLGF). Lys-168 is a topological domain (periplasmic). The helical transmembrane segment at 169-189 (AGIWFYSLIVIAVGIIIFFVL) threads the bilayer. The Cytoplasmic portion of the chain corresponds to 190–220 (NDKEEAPSVEVKKEDGASKNTSMTSVLKDKT). Transmembrane regions (helical) follow at residues 221–241 (IWLI…LTFF) and 242–262 (IPFL…YGII). At 263–288 (NQYCLKMIGGPIGGMISDKILKSPSK) the chain is on the cytoplasmic side. A run of 2 helical transmembrane segments spans residues 289 to 309 (YLCY…MLPH) and 310 to 330 (ESMP…IVFT). The Cytoplasmic portion of the chain corresponds to 331-354 (QRAVFFAPIGEAKIAENKTGAAMA). A helical membrane pass occupies residues 355-375 (LGSFIGYAPAMFCFSLYGYIL). At 376–385 (DLNPGIIGYK) the chain is on the periplasmic side. Residues 386-406 (IVFGIMACFAFSGAVVSVMLV) form a helical membrane-spanning segment. The Cytoplasmic portion of the chain corresponds to 407 to 421 (KRISQRKKEMLAAEA).

This sequence belongs to the major facilitator superfamily.

It localises to the cell inner membrane. This chain is Inner membrane protein YihN (yihN), found in Escherichia coli (strain K12).